Reading from the N-terminus, the 1349-residue chain is DNA-directed RNA polymerase subunit beta' (1349 aa).

The Zn(2+) site is built by Cys-219, Cys-293, Cys-300, and Cys-303. The segment at 1298-1349 (LDSPTLGESGFGSRRAERSVLDDEDELIADEVVDDDDFEEEEEDDEDDFDDE) is disordered. The segment covering 1319–1349 (DDEDELIADEVVDDDDFEEEEEDDEDDFDDE) has biased composition (acidic residues).

It belongs to the RNA polymerase beta' chain family. RpoC2 subfamily. In cyanobacteria the RNAP catalytic core is composed of 2 alpha, 1 beta, 1 beta', 1 gamma and 1 omega subunit. When a sigma factor is associated with the core the holoenzyme is formed, which can initiate transcription. Requires Zn(2+) as cofactor.

The catalysed reaction is RNA(n) + a ribonucleoside 5'-triphosphate = RNA(n+1) + diphosphate. Its function is as follows. DNA-dependent RNA polymerase catalyzes the transcription of DNA into RNA using the four ribonucleoside triphosphates as substrates. This chain is DNA-directed RNA polymerase subunit beta', found in Nostoc punctiforme (strain ATCC 29133 / PCC 73102).